A 122-amino-acid polypeptide reads, in one-letter code: UPF0102 protein VCM66_0538 (122 aa).

Belongs to the UPF0102 family.

This chain is UPF0102 protein VCM66_0538, found in Vibrio cholerae serotype O1 (strain M66-2).